The chain runs to 102 residues: Thioredoxin (102 aa).

A Thioredoxin domain is found at 1–102; that stretch reads MVKVVSAENF…SLIRLINQHS (102 aa). Cysteines 28 and 31 form a disulfide.

It belongs to the thioredoxin family.

Participates in various redox reactions through the reversible oxidation of its active center dithiol to a disulfide and catalyzes dithiol-disulfide exchange reactions. This Chlamydia caviae (strain ATCC VR-813 / DSM 19441 / 03DC25 / GPIC) (Chlamydophila caviae) protein is Thioredoxin (trxA).